The chain runs to 201 residues: MDLLEFVDFLAKALNIHESKYDYQHVIYIDDETNVKILCNGCKNIFKTTPHTHLYLKNGECSKCFPCRKYKKLTTEKIISKLEKKYSDDFDYSEIDYRGVNYPVIISCKKCKNRFSVLPKEFLRNPKCRACGRKKNLSSREYVERAVLIHGSKYDYSKIEYRGLKCDIEIICNNCGILLKINARNHLRGRKCGCLLGNKTS.

This is an uncharacterized protein from Acanthamoeba polyphaga mimivirus (APMV).